A 109-amino-acid chain; its full sequence is Synaptobrevin-1 (109 aa).

Residues 1 to 26 form a disordered region; the sequence is MDAQGDAGAQGGSQGGPRPSNKRLQQ. At 1–86 the chain is on the cytoplasmic side; that stretch reads MDAQGDAGAQ…KRKYWWKNIK (86 aa). In terms of domain architecture, v-SNARE coiled-coil homology spans 23–83; the sequence is RLQQTQAQVD…ATLKRKYWWK (61 aa). A helical; Anchor for type IV membrane protein transmembrane segment spans residues 87-107; the sequence is MMIIMCAIVVILIIIIVLWAG. Over 108–109 the chain is Extracellular; that stretch reads GK.

The protein belongs to the synaptobrevin family. As to quaternary structure, part of the SNARE core complex containing ric-4/SNAP25, snb-1/VAMP2 and unc-64/STX1A. This complex binds to cpx-1/CPLX1. Expressed in the nervous system notably the nerve ring, ventral cord and dorsal cord.

The protein localises to the cytoplasmic vesicle. Its subcellular location is the secretory vesicle. It is found in the synaptic vesicle membrane. It localises to the cell membrane. The protein resides in the synapse. The protein localises to the synaptosome. Involved in the targeting and/or fusion of transport vesicles to their target membrane. Acts in neuronal exocytosis of synaptic transmission. Likely to have a role in cholinergic transmisson. Required for viability, coordinated movement and M3 pharynx motor neuron function. The chain is Synaptobrevin-1 from Caenorhabditis elegans.